A 193-amino-acid polypeptide reads, in one-letter code: Segregation and condensation protein B (193 aa).

Belongs to the ScpB family. Homodimer. Homodimerization may be required to stabilize the binding of ScpA to the Smc head domains. Component of a cohesin-like complex composed of ScpA, ScpB and the Smc homodimer, in which ScpA and ScpB bind to the head domain of Smc. The presence of the three proteins is required for the association of the complex with DNA.

It localises to the cytoplasm. In terms of biological role, participates in chromosomal partition during cell division. May act via the formation of a condensin-like complex containing Smc and ScpA that pull DNA away from mid-cell into both cell halves. This is Segregation and condensation protein B from Clostridium botulinum (strain Kyoto / Type A2).